A 1194-amino-acid chain; its full sequence is Multidrug efflux ATP-binding/permease protein BCG_0231 (1194 aa).

6 helical membrane-spanning segments follow: residues 20–40 (LLLGFGAALAGTVIAVLVPLV), 56–76 (LAPWAVVLVAAAGATYLLTYV), 130–150 (LLFDVPNVLRHVLTLLLGVAV), 153–173 (WLSVPLALLAVLLVPVIGLIA), 258–278 (FALGGWMAAQGSITVGTFVAF), and 279–299 (WACLTLLARPACDLAGMLTIA). The ABC transmembrane type-1 1 domain occupies 21-301 (LLGFGAALAG…LAGMLTIAQQ (281 aa)). Residues 334-568 (LEFQRVSFGY…CPRYRELLSP (235 aa)) enclose the ABC transporter 1 domain. 367 to 374 (GAPGSGKS) lines the ATP pocket. The next 6 helical transmembrane spans lie at 628 to 648 (ALSLLLVAVQTCAGLLPPLLI), 660 to 680 (VLSALWWAALAGTATVVIRWV), 743 to 763 (LVVAVISVVTLVGILVALLAI), 765 to 785 (ARLVLLIFTTMPVLALATWQF), 847 to 867 (LLALYYPFVALLCSLATTLVL), and 878 to 898 (VISVGALVTYLLYIELLYTPI). The ABC transmembrane type-1 2 domain maps to 628–910 (ALSLLLVAVQ…LAQMFDDYQR (283 aa)). One can recognise an ABC transporter 2 domain in the interval 942–1177 (VVFDAVHYSY…GGHYSRLWAA (236 aa)). Residue 976 to 983 (GSTGSGKS) participates in ATP binding.

It belongs to the ABC transporter superfamily. Lipid exporter (TC 3.A.1.106) family.

It localises to the cell inner membrane. Its function is as follows. Overexpression increases resistance to chloramphenicol, ampicillin, streptomycin, tetracyclin and vancomycin. The protein is Multidrug efflux ATP-binding/permease protein BCG_0231 of Mycobacterium bovis (strain BCG / Pasteur 1173P2).